The following is a 156-amino-acid chain: Small ribosomal subunit protein uS7 (156 aa).

The protein belongs to the universal ribosomal protein uS7 family. In terms of assembly, part of the 30S ribosomal subunit. Contacts proteins S9 and S11.

One of the primary rRNA binding proteins, it binds directly to 16S rRNA where it nucleates assembly of the head domain of the 30S subunit. Is located at the subunit interface close to the decoding center, probably blocks exit of the E-site tRNA. The sequence is that of Small ribosomal subunit protein uS7 from Thermoanaerobacter pseudethanolicus (strain ATCC 33223 / 39E) (Clostridium thermohydrosulfuricum).